The sequence spans 506 residues: (+)-vincadifformine 19-hydroxylase (506 aa).

Over 1–4 (MELD) the chain is Lumenal. The helical transmembrane segment at 5 to 25 (ECSPSIFIISFIFIAISIAIL) threads the bilayer. Topologically, residues 26 to 506 (RRIRPKKTKA…DLHLIPTSYM (481 aa)) are cytoplasmic. Residue Cys-450 participates in heme binding.

Belongs to the cytochrome P450 family. The cofactor is heme. Accumulates progressively in roots.

The protein localises to the endoplasmic reticulum membrane. The enzyme catalyses (+)-vincadifformine + reduced [NADPH--hemoprotein reductase] + O2 = (+)-minovincinine + oxidized [NADPH--hemoprotein reductase] + H2O + H(+). Its pathway is alkaloid biosynthesis. Its activity is regulated as follows. The enantiomer (-)-vincadifformine acts as a competitive inhibitor. Its function is as follows. Component of the monoterpenoid indole alkaloids (MIAs, e.g. echitovenine, tabersonine, lochnericine, 19-hydroxytabersonine and horhammericine) biosynthetic pathway; MIAs are used in cancer treatment and other medical applications. Cytochrome P450 catalyzing the hydroxylation of (+)-vincadifformine to (+)-minovincinine. The chain is (+)-vincadifformine 19-hydroxylase from Catharanthus roseus (Madagascar periwinkle).